Consider the following 892-residue polypeptide: Ice-binding protein 1 (892 aa).

Residues 1–23 form the signal peptide; sequence MNHSIKKTYLVFTMLLGFILLAG. Cys24 carries the N-palmitoyl cysteine lipid modification. Cys24 carries S-diacylglycerol cysteine lipidation. 7 consecutive BIG2 domains span residues 43–111, 134–205, 221–288, 306–386, 392–471, 478–558, and 565–638; these read TSIA…ITAS, TALA…SLGS, SIAL…ITAD, TSIM…TVTV, TSIA…TNLT, NSIV…NLTV, and SIDV…QASL. An Ice-binding site motif (T-A/G-X-T/N) motif is present at residues 866–869; the sequence is TGAN.

Belongs to the ice-binding protein family.

Its subcellular location is the cell outer membrane. In terms of biological role, ice-binding adhesion protein that adsorbs this bacterium onto ice to maintain a favorable position in its aquatic habitat. Inhibits growth of the ice crystals. Has high thermal hysteresis (TH) activity, which is the ability to lower the freezing point of an aqueous solution below its melting point. The TH activity of this protein is approximately 1.4 degrees Celsius at 25 uM and little below 2 degrees Celsius at 80 uM. The chain is Ice-binding protein 1 from Shewanella frigidimarina (strain NCIMB 400).